Consider the following 428-residue polypeptide: 3-phosphoshikimate 1-carboxyvinyltransferase (428 aa).

Positions 23, 24, and 28 each coordinate 3-phosphoshikimate. Lys-23 serves as a coordination point for phosphoenolpyruvate. Gly-97 and Arg-125 together coordinate phosphoenolpyruvate. The 3-phosphoshikimate site is built by Ser-170, Ser-171, Gln-172, Ser-198, Asp-314, Asn-337, and Lys-341. Residue Gln-172 coordinates phosphoenolpyruvate. Asp-314 (proton acceptor) is an active-site residue. Residues Arg-345, Arg-387, and Lys-412 each coordinate phosphoenolpyruvate.

Belongs to the EPSP synthase family. Monomer.

It localises to the cytoplasm. It catalyses the reaction 3-phosphoshikimate + phosphoenolpyruvate = 5-O-(1-carboxyvinyl)-3-phosphoshikimate + phosphate. It functions in the pathway metabolic intermediate biosynthesis; chorismate biosynthesis; chorismate from D-erythrose 4-phosphate and phosphoenolpyruvate: step 6/7. Its function is as follows. Catalyzes the transfer of the enolpyruvyl moiety of phosphoenolpyruvate (PEP) to the 5-hydroxyl of shikimate-3-phosphate (S3P) to produce enolpyruvyl shikimate-3-phosphate and inorganic phosphate. This is 3-phosphoshikimate 1-carboxyvinyltransferase from Yersinia pseudotuberculosis serotype IB (strain PB1/+).